Reading from the N-terminus, the 100-residue chain is NAD(P)H-quinone oxidoreductase subunit 4L, chloroplastic (100 aa).

Helical transmembrane passes span 2–22 (ILQHILILSSFLFCLGIFGLI), 28–48 (VKILICLELIFNAVNLNLVIF), and 61–81 (LFGLFIIAIAAAEAAIALAIL).

The protein belongs to the complex I subunit 4L family. As to quaternary structure, NDH is composed of at least 16 different subunits, 5 of which are encoded in the nucleus.

The protein localises to the plastid. It is found in the chloroplast thylakoid membrane. It catalyses the reaction a plastoquinone + NADH + (n+1) H(+)(in) = a plastoquinol + NAD(+) + n H(+)(out). The enzyme catalyses a plastoquinone + NADPH + (n+1) H(+)(in) = a plastoquinol + NADP(+) + n H(+)(out). Its function is as follows. NDH shuttles electrons from NAD(P)H:plastoquinone, via FMN and iron-sulfur (Fe-S) centers, to quinones in the photosynthetic chain and possibly in a chloroplast respiratory chain. The immediate electron acceptor for the enzyme in this species is believed to be plastoquinone. Couples the redox reaction to proton translocation, and thus conserves the redox energy in a proton gradient. The chain is NAD(P)H-quinone oxidoreductase subunit 4L, chloroplastic from Chara vulgaris (Common stonewort).